We begin with the raw amino-acid sequence, 868 residues long: Leucine--tRNA ligase (868 aa).

The 'HIGH' region motif lies at 42–52 (PYPSGKLHMGH). The 'KMSKS' region motif lies at 627–631 (KMSKS). Position 630 (K630) interacts with ATP.

Belongs to the class-I aminoacyl-tRNA synthetase family.

The protein localises to the cytoplasm. The catalysed reaction is tRNA(Leu) + L-leucine + ATP = L-leucyl-tRNA(Leu) + AMP + diphosphate. This Pseudomonas entomophila (strain L48) protein is Leucine--tRNA ligase.